Reading from the N-terminus, the 160-residue chain is Lymphocyte antigen 96 (160 aa).

Residues 1-16 (MLPFILFSTLLPLIFT) form the signal peptide. 3 disulfides stabilise this stretch: C25–C51, C37–C148, and C95–C105. Residues N26, N77, and N101 are each glycosylated (N-linked (GlcNAc...) asparagine). The interval 119 to 123 (FSFKG) is interaction with lipopolysaccharide. N-linked (GlcNAc...) asparagine glycosylation is present at N150.

As to quaternary structure, heterogeneous homomer formed from homodimers; disulfide-linked. Belongs to the lipopolysaccharide (LPS) receptor, a multi-protein complex containing at least CD14, LY96 and TLR4. Binds to the extracellular domains of TLR2 and TLR4. Ligand binding induces interaction with TLR4 and oligomerization of the complex. N-glycosylated.

The protein resides in the secreted. It is found in the extracellular space. Its function is as follows. Binds bacterial lipopolysaccharide (LPS). Cooperates with TLR4 in the innate immune response to bacterial lipopolysaccharide (LPS), and with TLR2 in the response to cell wall components from Gram-positive and Gram-negative bacteria. Enhances TLR4-dependent activation of NF-kappa-B. Cells expressing both LY96 and TLR4, but not TLR4 alone, respond to LPS. This chain is Lymphocyte antigen 96 (LY96), found in Cricetulus griseus (Chinese hamster).